Reading from the N-terminus, the 99-residue chain is uncharacterized protein (99 aa).

This is an uncharacterized protein from Acidianus bottle-shaped virus (isolate Italy/Pozzuoli) (ABV).